Consider the following 319-residue polypeptide: Pantothenate kinase (319 aa).

101 to 108 (GSVAVGKS) provides a ligand contact to ATP.

It belongs to the prokaryotic pantothenate kinase family.

The protein localises to the cytoplasm. The catalysed reaction is (R)-pantothenate + ATP = (R)-4'-phosphopantothenate + ADP + H(+). It participates in cofactor biosynthesis; coenzyme A biosynthesis; CoA from (R)-pantothenate: step 1/5. The polypeptide is Pantothenate kinase (Clavibacter michiganensis subsp. michiganensis (strain NCPPB 382)).